A 431-amino-acid chain; its full sequence is Glutamate-1-semialdehyde 2,1-aminomutase (431 aa).

An N6-(pyridoxal phosphate)lysine modification is found at lysine 269.

This sequence belongs to the class-III pyridoxal-phosphate-dependent aminotransferase family. HemL subfamily. As to quaternary structure, homodimer. Requires pyridoxal 5'-phosphate as cofactor.

The protein localises to the cytoplasm. The enzyme catalyses (S)-4-amino-5-oxopentanoate = 5-aminolevulinate. It participates in porphyrin-containing compound metabolism; protoporphyrin-IX biosynthesis; 5-aminolevulinate from L-glutamyl-tRNA(Glu): step 2/2. Its pathway is porphyrin-containing compound metabolism; chlorophyll biosynthesis. The chain is Glutamate-1-semialdehyde 2,1-aminomutase from Chlorobium limicola (strain DSM 245 / NBRC 103803 / 6330).